Consider the following 1293-residue polypeptide: Phosphoribosylformylglycinamidine synthase (1293 aa).

Residues 305 to 316 (GAATGSGGEIRD), 384 to 386 (TGY), and Ala676 contribute to the ATP site. A disordered region spans residues 307–326 (ATGSGGEIRDEGATGRGSKP). The Mg(2+) site is built by Asp677, Glu716, Asn720, and Asp884. Residue Ser886 coordinates ATP. Positions 1040-1293 (MAILREQGVN…MFRNARVKIG (254 aa)) constitute a Glutamine amidotransferase type-1 domain. Cys1133 acts as the Nucleophile in catalysis. Residues His1258 and Glu1260 contribute to the active site.

It in the N-terminal section; belongs to the FGAMS family. As to quaternary structure, monomer.

The protein resides in the cytoplasm. It catalyses the reaction N(2)-formyl-N(1)-(5-phospho-beta-D-ribosyl)glycinamide + L-glutamine + ATP + H2O = 2-formamido-N(1)-(5-O-phospho-beta-D-ribosyl)acetamidine + L-glutamate + ADP + phosphate + H(+). Its pathway is purine metabolism; IMP biosynthesis via de novo pathway; 5-amino-1-(5-phospho-D-ribosyl)imidazole from N(2)-formyl-N(1)-(5-phospho-D-ribosyl)glycinamide: step 1/2. Its function is as follows. Phosphoribosylformylglycinamidine synthase involved in the purines biosynthetic pathway. Catalyzes the ATP-dependent conversion of formylglycinamide ribonucleotide (FGAR) and glutamine to yield formylglycinamidine ribonucleotide (FGAM) and glutamate. The chain is Phosphoribosylformylglycinamidine synthase from Shewanella frigidimarina (strain NCIMB 400).